Consider the following 446-residue polypeptide: MISARQLAFLILRDINRRDSYTDVAIDRALQKHPLSPPDRRFCTELVYGVVRRQRTLDCLIEQLGDRPIGKQPPDLRRIVQLGLYQLRYLDQVPASAAVNTGVDLAKANGLKGLSKVVNGMLRRYQRAEEQGKNILDQEKISLGEQYSFPDWLMELFEQTWGKAETESLCAYFNQNPSLDLRINPLKTSRVEVAQSLAELNLTTTAMAGLPQGLRLGGKTGAITQLPGFAEGWWTVQDASAQWVAQILNPQPEETIFDVCAAPGGKTTHIAELMGDQGQIYAGDRHGWRLQKLAVTQQRLGLTSIKIWEGDLTQPGVKPPVELVDRALLDVPCSGLGTLHRNPDLRWRQTPATIATLLPLQQALLKAIAPLVKSGGTLVYSTCTLNPAENEAQIERFLQDHEDWRSEPFEWTSPQGQTNSVTSGMLTILPHHHHQDGFFIANLKKA.

S-adenosyl-L-methionine-binding positions include 260 to 266 (CAAPGGK), aspartate 284, aspartate 311, and aspartate 330. Cysteine 383 serves as the catalytic Nucleophile.

This sequence belongs to the class I-like SAM-binding methyltransferase superfamily. RsmB/NOP family.

Its subcellular location is the cytoplasm. It catalyses the reaction cytidine(967) in 16S rRNA + S-adenosyl-L-methionine = 5-methylcytidine(967) in 16S rRNA + S-adenosyl-L-homocysteine + H(+). In terms of biological role, specifically methylates the cytosine at position 967 (m5C967) of 16S rRNA. The chain is Probable ribosomal RNA small subunit methyltransferase B from Synechocystis sp. (strain ATCC 27184 / PCC 6803 / Kazusa).